Reading from the N-terminus, the 83-residue chain is Cytochrome b559 subunit alpha (83 aa).

Residues 21 to 35 (VIHSITIPSLFIAGW) traverse the membrane as a helical segment. H23 serves as a coordination point for heme.

It belongs to the PsbE/PsbF family. As to quaternary structure, heterodimer of an alpha subunit and a beta subunit. PSII is composed of 1 copy each of membrane proteins PsbA, PsbB, PsbC, PsbD, PsbE, PsbF, PsbH, PsbI, PsbJ, PsbK, PsbL, PsbM, PsbT, PsbX, PsbY, PsbZ, Psb30/Ycf12, at least 3 peripheral proteins of the oxygen-evolving complex and a large number of cofactors. It forms dimeric complexes. The cofactor is heme b.

It is found in the plastid. The protein localises to the chloroplast thylakoid membrane. In terms of biological role, this b-type cytochrome is tightly associated with the reaction center of photosystem II (PSII). PSII is a light-driven water:plastoquinone oxidoreductase that uses light energy to abstract electrons from H(2)O, generating O(2) and a proton gradient subsequently used for ATP formation. It consists of a core antenna complex that captures photons, and an electron transfer chain that converts photonic excitation into a charge separation. The chain is Cytochrome b559 subunit alpha from Tupiella akineta (Green alga).